Here is a 217-residue protein sequence, read N- to C-terminus: Hypersensitivity response secretion protein HrcR (217 aa).

Transmembrane regions (helical) follow at residues 6–26 (FASLIVMAVAIALLPFAAMVV), 52–72 (MVLNGIAMIVSCFVMAPVGME), 158–178 (IGFLLYLAFIVIDLVIANLLM), and 190–210 (VAIPFKLLLFVVMDGWSVLIH).

This sequence belongs to the FliP/MopC/SpaP family.

It is found in the cell membrane. Functionally, involved in the secretion of PopA, a proteinaceous elicitor of the hypersensitivity response in plants. The chain is Hypersensitivity response secretion protein HrcR (hrcR) from Ralstonia nicotianae (strain ATCC BAA-1114 / GMI1000) (Ralstonia solanacearum).